Here is a 101-residue protein sequence, read N- to C-terminus: UPF0235 protein Maeo_0841 (101 aa).

It belongs to the UPF0235 family.

The polypeptide is UPF0235 protein Maeo_0841 (Methanococcus aeolicus (strain ATCC BAA-1280 / DSM 17508 / OCM 812 / Nankai-3)).